The chain runs to 64 residues: MSESLTKVILSVITTNRNRVAGGAPVFFCNDQKEMELFAKNLEAILDGIAHRIGDDVYLIVKHF.

This is an uncharacterized protein from Bacillus subtilis (strain 168).